The primary structure comprises 99 residues: C-C motif chemokine 8 (99 aa).

An N-terminal signal peptide occupies residues 1-23 (MKVSAGILCLLLVAATFGTQVLA). At Gln24 the chain carries Pyrrolidone carboxylic acid. Intrachain disulfides connect Cys34/Cys59 and Cys35/Cys75.

It belongs to the intercrine beta (chemokine CC) family. In terms of assembly, monomer or homodimer; in equilibrium.

The protein resides in the secreted. In terms of biological role, chemotactic factor that attracts monocytes. This protein can bind heparin. This chain is C-C motif chemokine 8 (CCL8), found in Bos taurus (Bovine).